The primary structure comprises 64 residues: Alpha-conotoxin-like Lp1.7 (64 aa).

Residues 1 to 21 (MGMRMMFTMFLLVVLTTTVVS) form the signal peptide. Positions 22-41 (FNSDRESNHENRRTSNQITR) are excised as a propeptide. 2 disulfides stabilise this stretch: Cys47–Cys53 and Cys48–Cys61. The tract at residues 49 to 51 (DDP) is lacks the Ser-Xaa-Pro motif that is crucial for potent interaction with nAChR.

Belongs to the conotoxin A superfamily. As to expression, expressed by the venom duct.

The protein localises to the secreted. Alpha-conotoxins act on postsynaptic membranes, they bind to the nicotinic acetylcholine receptors (nAChR) and thus inhibit them. Has possibly a distinct nAChR binding mode from other alpha-conotoxins, due to a different three residue motif (lacks the Ser-Xaa-Pro motif). The protein is Alpha-conotoxin-like Lp1.7 of Conus leopardus (Leopard cone).